Consider the following 273-residue polypeptide: Dermonecrotic toxin LdSicTox-alphaIB1aiv (273 aa).

His5 is an active-site residue. Residues Glu25 and Asp27 each contribute to the Mg(2+) site. His41 serves as the catalytic Nucleophile. Disulfide bonds link Cys45–Cys51 and Cys47–Cys190. Residue Asp85 coordinates Mg(2+). Residue Asn250 is glycosylated (N-linked (GlcNAc...) asparagine).

The protein belongs to the arthropod phospholipase D family. Class II subfamily. The cofactor is Mg(2+). Expressed by the venom gland.

It localises to the secreted. It catalyses the reaction an N-(acyl)-sphingosylphosphocholine = an N-(acyl)-sphingosyl-1,3-cyclic phosphate + choline. It carries out the reaction an N-(acyl)-sphingosylphosphoethanolamine = an N-(acyl)-sphingosyl-1,3-cyclic phosphate + ethanolamine. The catalysed reaction is a 1-acyl-sn-glycero-3-phosphocholine = a 1-acyl-sn-glycero-2,3-cyclic phosphate + choline. The enzyme catalyses a 1-acyl-sn-glycero-3-phosphoethanolamine = a 1-acyl-sn-glycero-2,3-cyclic phosphate + ethanolamine. In terms of biological role, dermonecrotic toxins cleave the phosphodiester linkage between the phosphate and headgroup of certain phospholipids (sphingolipid and lysolipid substrates), forming an alcohol (often choline) and a cyclic phosphate. This toxin acts on sphingomyelin (SM). It may also act on ceramide phosphoethanolamine (CPE), lysophosphatidylcholine (LPC) and lysophosphatidylethanolamine (LPE), but not on lysophosphatidylserine (LPS), and lysophosphatidylglycerol (LPG). It acts by transphosphatidylation, releasing exclusively cyclic phosphate products as second products. Induces dermonecrosis, hemolysis, increased vascular permeability, edema, inflammatory response, and platelet aggregation. This is Dermonecrotic toxin LdSicTox-alphaIB1aiv from Loxosceles deserta (Desert recluse spider).